Reading from the N-terminus, the 358-residue chain is Putative hydrogenase expression/formation protein MJ0993 (358 aa).

Fe cation contacts are provided by Cys33, Cys61, and Cys64.

The protein belongs to the HypD family.

The protein is Putative hydrogenase expression/formation protein MJ0993 of Methanocaldococcus jannaschii (strain ATCC 43067 / DSM 2661 / JAL-1 / JCM 10045 / NBRC 100440) (Methanococcus jannaschii).